The primary structure comprises 192 residues: Putative ripening-related protein 2 (192 aa).

The N-terminal stretch at 1–26 (MATTNCLLALAIAGLVLVSLPGLSRG) is a signal peptide.

It belongs to the kiwellin family.

The protein localises to the secreted. In Oryza sativa subsp. japonica (Rice), this protein is Putative ripening-related protein 2.